Consider the following 463-residue polypeptide: uncharacterized protein (463 aa).

The protein belongs to the mycobacterial PPE family.

This is an uncharacterized protein from Mycobacterium tuberculosis (strain ATCC 25618 / H37Rv).